Consider the following 48-residue polypeptide: Gas vesicle protein A (48 aa).

This sequence belongs to the gas vesicle GvpA family. In terms of assembly, the gas vesicle shell is 2 nm thick and consists of a single layer of this protein. It forms helical ribs nearly perpendicular to the long axis of the vesicle.

The protein localises to the gas vesicle shell. Gas vesicles are hollow, gas filled proteinaceous nanostructures found in some microorganisms. During planktonic growth they allow positioning of the organism at a favorable depth for light or nutrient acquisition. GvpA forms the protein shell. This Spirulina sp. (strain CCAP 1475/10) protein is Gas vesicle protein A.